Reading from the N-terminus, the 253-residue chain is Bridging integrator 3 (253 aa).

A BAR domain is found at 9-232 (GQPKKQIVSK…LDQPGHSDEH (224 aa)). Coiled-coil stretches lie at residues 16–57 (VSKT…AMSK) and 120–151 (SLNM…KEKT).

The protein resides in the cytoplasm. Its subcellular location is the cytoskeleton. Its function is as follows. Involved in cytokinesis and septation where it has a role in the localization of F-actin. The chain is Bridging integrator 3 (Bin3) from Rattus norvegicus (Rat).